We begin with the raw amino-acid sequence, 108 residues long: UPF0145 protein Npun_F4817 (108 aa).

Belongs to the UPF0145 family.

In Nostoc punctiforme (strain ATCC 29133 / PCC 73102), this protein is UPF0145 protein Npun_F4817.